The chain runs to 766 residues: Subtilisin-like protease SBT4.15 (766 aa).

Positions 1-23 (MVSNQRVRLFMLCFCLVNNAVIA) are cleaved as a signal peptide. A propeptide spans 24–113 (ATEDENVERK…VFKNTQRQLH (90 aa)) (activation peptide). The 79-residue stretch at 35 to 113 (YIVYMGEATE…VFKNTQRQLH (79 aa)) folds into the Inhibitor I9 domain. One can recognise a Peptidase S8 domain in the interval 117–601 (SWDFLGLVES…SGQINPRRAI (485 aa)). The Charge relay system role is filled by D144. N175 carries an N-linked (GlcNAc...) asparagine glycan. H210 functions as the Charge relay system in the catalytic mechanism. Residues N233, N376, and N465 are each glycosylated (N-linked (GlcNAc...) asparagine). Positions 365–460 (MYPLTSGSLA…YVFFEDGTKI (96 aa)) constitute a PA domain. The active-site Charge relay system is S543. N-linked (GlcNAc...) asparagine glycosylation is found at N624, N638, and N668.

This sequence belongs to the peptidase S8 family. In terms of processing, the C-terminal propeptide is autocleaved.

The protein resides in the secreted. The protein is Subtilisin-like protease SBT4.15 of Arabidopsis thaliana (Mouse-ear cress).